A 678-amino-acid polypeptide reads, in one-letter code: MVPSTFSRLKAARCLPVVLAALIFAGCGTHTPDQSTAYMQGTAQADSAFYLQQMQQSSDDTRINWQLLAIRALVKEGKTGQAVELFNQLPQELNDSQRREKTLLAVEIKLAQKDFAGAQNLLAKITPADLEQNQQARYWQAKIDASQGRPSIDLLRALIAQEPLLGAKEKKQNIDATWQALSSMTQEQANTLVINADENILQGWLDLQRVWFDNRNDPDMMKAGIADWQKRYPNNPGAKMLPTQLVNVKAFKPASTNKIALLLPLNGQAAVFGRTIQQGFEAAKNIGTQPVAAQVAAAPAADVAEQPQPQTVDGVASPAQASVSDLTGDQPAAQPVPVSAPATSTAAVSAPANPSAELKIYDTSSQPLSQILSQVQQDGASIVVGPLLKNNVEELLKSNTPLNVLALNQPENIENRVNICYFALSPEDEARDAARHIRDQGKQAPLVLIPRSSLGDRVANAFAQEWQKLGGGTVLQQKFGSTSELRAGVNGGSGIALTGTPITPRATTDSGMTTNNPTLQTTPTDDQFTNNGGRVDAVYIVATPGEIAFIKPMIAMRNGSQSGAMLYASSRSAQGTAGPDFRLEMEGLQYSEIPMLAGGNLPLMQQALSAVNNDYSLARMYAMGVDAWSLANHFSQMRQVQGFEINGNTGSLTANPDCVINRKLSWLQYQQGQVVPVS.

An N-terminal signal peptide occupies residues 1-26; that stretch reads MVPSTFSRLKAARCLPVVLAALIFAG. Cysteine 27 carries N-palmitoyl cysteine lipidation. A lipid anchor (S-diacylglycerol cysteine) is attached at cysteine 27. 2 disordered regions span residues 302 to 340 and 496 to 528; these read DVAEQPQPQTVDGVASPAQASVSDLTGDQPAAQPVPVSA and ALTGTPITPRATTDSGMTTNNPTLQTTPTDDQF. Composition is skewed to low complexity over residues 330 to 340 and 513 to 528; these read QPAAQPVPVSA and TTNNPTLQTTPTDDQF.

This sequence belongs to the LpoA family. As to quaternary structure, interacts with PBP1a.

Its subcellular location is the cell outer membrane. Functionally, regulator of peptidoglycan synthesis that is essential for the function of penicillin-binding protein 1A (PBP1a). This Shigella sonnei (strain Ss046) protein is Penicillin-binding protein activator LpoA.